Reading from the N-terminus, the 235-residue chain is uncharacterized protein (235 aa).

It to E.coli YbeU.

This is an uncharacterized protein from Escherichia coli (strain K12).